We begin with the raw amino-acid sequence, 225 residues long: Cytidylate kinase (225 aa).

ATP is bound at residue 12-20; it reads GPSGAGKGT.

Belongs to the cytidylate kinase family. Type 1 subfamily.

The protein localises to the cytoplasm. The enzyme catalyses CMP + ATP = CDP + ADP. It catalyses the reaction dCMP + ATP = dCDP + ADP. The protein is Cytidylate kinase of Vibrio cholerae serotype O1 (strain ATCC 39315 / El Tor Inaba N16961).